A 369-amino-acid polypeptide reads, in one-letter code: NAD(P)H-quinone oxidoreductase subunit 1, chloroplastic (369 aa).

8 helical membrane passes run 29–49 (IWIIVSILTTIVGVTLGVLVI), 97–117 (IWLFNVGPAIVVIPVFLSYLV), 129–149 (LGIGVFFWIAVSSIAPLGLLM), 167–187 (AAQSISYEIPLALCVLSISLL), 205–225 (LLGWNLWRQPIGFLIFFISSL), 255–275 (FGLFYVGSYLNLLVSSLFVTV), 305–325 (IINAIIGIIITLTKAYLFLFV), and 348–368 (FLLPVALGNLLLTASFQILLL).

The protein belongs to the complex I subunit 1 family. NDH is composed of at least 16 different subunits, 5 of which are encoded in the nucleus.

The protein resides in the plastid. It is found in the chloroplast thylakoid membrane. The enzyme catalyses a plastoquinone + NADH + (n+1) H(+)(in) = a plastoquinol + NAD(+) + n H(+)(out). It catalyses the reaction a plastoquinone + NADPH + (n+1) H(+)(in) = a plastoquinol + NADP(+) + n H(+)(out). Its function is as follows. NDH shuttles electrons from NAD(P)H:plastoquinone, via FMN and iron-sulfur (Fe-S) centers, to quinones in the photosynthetic chain and possibly in a chloroplast respiratory chain. The immediate electron acceptor for the enzyme in this species is believed to be plastoquinone. Couples the redox reaction to proton translocation, and thus conserves the redox energy in a proton gradient. The sequence is that of NAD(P)H-quinone oxidoreductase subunit 1, chloroplastic from Angiopteris evecta (Mule's foot fern).